A 100-amino-acid chain; its full sequence is Mitochondrial zinc maintenance protein 1, mitochondrial (100 aa).

It belongs to the complex I LYR family. MZM1 subfamily. In terms of assembly, interacts with RIP1.

Its subcellular location is the mitochondrion matrix. In terms of biological role, assembly factor required for Rieske Fe-S protein RIP1 incorporation into the cytochrome b-c1 (CIII) complex. Functions as a chaperone, binding to this subunit within the mitochondrial matrix and stabilizing it prior to its translocation and insertion into the late CIII dimeric intermediate within the mitochondrial inner membrane. Modulates the mitochondrial matrix zinc pool. The protein is Mitochondrial zinc maintenance protein 1, mitochondrial (new18) of Schizosaccharomyces pombe (strain 972 / ATCC 24843) (Fission yeast).